The following is a 653-amino-acid chain: Laccase ustL (653 aa).

The first 20 residues, 1–20 (MTSLTGLALLLCVLASQSWA), serve as a signal peptide directing secretion. 2 consecutive Plastocyanin-like domains span residues 31-143 (WEKG…RPKR) and 173-362 (VLSD…ATQV). N74, N220, N235, N255, N277, N405, N463, and N479 each carry an N-linked (GlcNAc...) asparagine glycan. The Plastocyanin-like 3 domain maps to 463 to 594 (NQTVGTEDEK…GGMSIALLDG (132 aa)). Residues H501, H504, H506, H576, C577, H578, and H582 each contribute to the Cu cation site. N623 is a glycosylation site (N-linked (GlcNAc...) asparagine).

This sequence belongs to the multicopper oxidase family.

The enzyme catalyses 4 norrubrofusarin + O2 = 2 ustilaginoidin A + 2 H2O. The protein operates within secondary metabolite biosynthesis. Functionally, laccase; part of the gene cluster that mediates the biosynthesis of ustilaginoidins, dimeric gamma-naphthopyrones isolated from different fungal species. The first step in the biosynthesis of ustilaginoidins is the production of gamma-naphthopyrone precursor YWA1 by the non-reducing polyketide synthase ustP, via condensation of one acetyl-CoA starter unit with 6 malonyl-CoA units. YWA1 is then probably substrate of the ustZ to yield norrubrofusarin via a dehydration reaction. A key enzyme in the biosynthetic pathway is the laccase ustL, which catalyzes the oxidative dimerization of norrubrofusarin to ustilaginoidin A. It can produce the M- and P-atropisomers in varying amounts, depending on the reaction conditions. For the biosynthesis of 3-methylustilaginoid in derivatives such as chaetochromin A, a methylated derivative of YWA1 is required. The C-methylation is considered to be catalyzed by ustM, the phosphopantetheine attachment site of which indicates that it acts on the growing polyketide chain before release of the product. For the biosynthesis of chaetochromin A, it is assumed that saturation of the D2 double bond takes place before dimerization, and is probably catalyzed by an external reductase because no candidate gene was identified within the cluster. The polypeptide is Laccase ustL (Ustilaginoidea virens (Rice false smut fungus)).